A 622-amino-acid chain; its full sequence is Serine/threonine-protein kinase MAK (622 aa).

The Protein kinase domain maps to 4–284 (YTTMRQLGDG…ASQALKHPYF (281 aa)). ATP is bound by residues 10 to 18 (LGDGTYGSV) and Lys-33. Asp-125 (proton acceptor) is an active-site residue. A Phosphothreonine; by autocatalysis modification is found at Thr-157. A Phosphotyrosine; by autocatalysis modification is found at Tyr-159. Residues 301–373 (QTLHKQLQPP…HHKQPQTMFP (73 aa)) are disordered.

It belongs to the protein kinase superfamily. CMGC Ser/Thr protein kinase family. CDC2/CDKX subfamily. Interacts with RP1. Interacts with AR and CDK20. Found in a complex containing MAK, AR and NCOA3. Interacts with FZR1 (via WD repeats). The cofactor is Mg(2+). In terms of processing, autophosphorylated. Phosphorylated on serine and threonine residues. As to expression, expressed mainly in testicular cells at and after meiosis.

Its subcellular location is the nucleus. The protein resides in the cytoplasm. The protein localises to the cytoskeleton. It localises to the microtubule organizing center. It is found in the centrosome. Its subcellular location is the spindle. The protein resides in the midbody. The protein localises to the cell projection. It localises to the cilium. It is found in the photoreceptor outer segment. Its subcellular location is the photoreceptor inner segment. It catalyses the reaction L-seryl-[protein] + ATP = O-phospho-L-seryl-[protein] + ADP + H(+). The catalysed reaction is L-threonyl-[protein] + ATP = O-phospho-L-threonyl-[protein] + ADP + H(+). Essential for the regulation of ciliary length and required for the long-term survival of photoreceptors. Could play an important function in spermatogenesis. Phosphorylates FZR1 in a cell cycle-dependent manner. Plays a role in the transcriptional coactivation of AR. The sequence is that of Serine/threonine-protein kinase MAK (Mak) from Rattus norvegicus (Rat).